The chain runs to 329 residues: MLLNGIVAAVITMIITIIGIPRFIMFFHKKKLGGQPTLEDVKQHASKAGTPTMGGFVFVVVSLVVSLVAALVFGKFSPAFITAWWVFAMYAVIGFLDDFLKVFKQINEGLTAKQKMLAQILIGIVSYFIYSHGEKSHIIHILSWQVNIGIFFSIFIIIWLVGWSNAVNLTDGIDGLASITVAISLTAYAVIAVVHQQYDVLLIILSVIGGLLGFFVFNHKPAKIFMGDVGSLALGGFLAIVSILLHAEWTLLLIGAVYVIETLSVMLQVAYFKKTGGKRIFRMTPIHHHFELGGFSGKAVGWSEWKIDIVFWLFTAVLSVIALCIYFAF.

Transmembrane regions (helical) follow at residues 1-21, 53-73, 76-96, 109-129, 141-161, 175-195, 198-218, 237-257, and 309-329; these read MLLNGIVAAVITMIITIIGIP, MGGFVFVVVSLVVSLVAALVF, FSPAFITAWWVFAMYAVIGFL, GLTAKQKMLAQILIGIVSYFI, ILSWQVNIGIFFSIFIIIWLV, GLASITVAISLTAYAVIAVVH, YDVLLIILSVIGGLLGFFVFN, FLAIVSILLHAEWTLLLIGAV, and IVFWLFTAVLSVIALCIYFAF.

This sequence belongs to the glycosyltransferase 4 family. MraY subfamily. The cofactor is Mg(2+).

It is found in the cell membrane. The enzyme catalyses UDP-N-acetyl-alpha-D-muramoyl-L-alanyl-gamma-D-glutamyl-L-lysyl-D-alanyl-D-alanine + di-trans,octa-cis-undecaprenyl phosphate = Mur2Ac(oyl-L-Ala-gamma-D-Glu-L-Lys-D-Ala-D-Ala)-di-trans,octa-cis-undecaprenyl diphosphate + UMP. Its pathway is cell wall biogenesis; peptidoglycan biosynthesis. Functionally, catalyzes the initial step of the lipid cycle reactions in the biosynthesis of the cell wall peptidoglycan: transfers peptidoglycan precursor phospho-MurNAc-pentapeptide from UDP-MurNAc-pentapeptide onto the lipid carrier undecaprenyl phosphate, yielding undecaprenyl-pyrophosphoryl-MurNAc-pentapeptide, known as lipid I. The chain is Phospho-N-acetylmuramoyl-pentapeptide-transferase from Lactococcus lactis subsp. cremoris (strain SK11).